A 353-amino-acid chain; its full sequence is Photosystem II D2 protein (353 aa).

T2 carries the post-translational modification N-acetylthreonine. T2 carries the post-translational modification Phosphothreonine. The helical transmembrane segment at 41–61 (CAYFALGGWFTGTTFVTSWYT) threads the bilayer. Chlorophyll a is bound at residue H118. A helical transmembrane segment spans residues 125–141 (GFMLRQFELARSVQLRP). Residues Q130 and N143 each coordinate pheophytin a. A helical transmembrane segment spans residues 153–166 (VFVSVFLIYPLGQS). H198 serves as a coordination point for chlorophyll a. A helical membrane pass occupies residues 208-228 (AALLCAIHGATVENTLFEDGD). A plastoquinone contacts are provided by H215 and F262. Fe cation is bound at residue H215. H269 is a binding site for Fe cation. Residues 279 to 295 (GLWMSALGVVGLALNLR) form a helical membrane-spanning segment.

It belongs to the reaction center PufL/M/PsbA/D family. In terms of assembly, PSII is composed of 1 copy each of membrane proteins PsbA, PsbB, PsbC, PsbD, PsbE, PsbF, PsbH, PsbI, PsbJ, PsbK, PsbL, PsbM, PsbT, PsbX, PsbY, PsbZ, Psb30/Ycf12, at least 3 peripheral proteins of the oxygen-evolving complex and a large number of cofactors. It forms dimeric complexes. The D1/D2 heterodimer binds P680, chlorophylls that are the primary electron donor of PSII, and subsequent electron acceptors. It shares a non-heme iron and each subunit binds pheophytin, quinone, additional chlorophylls, carotenoids and lipids. There is also a Cl(-1) ion associated with D1 and D2, which is required for oxygen evolution. The PSII complex binds additional chlorophylls, carotenoids and specific lipids. serves as cofactor.

Its subcellular location is the plastid. It localises to the chloroplast thylakoid membrane. It catalyses the reaction 2 a plastoquinone + 4 hnu + 2 H2O = 2 a plastoquinol + O2. Its function is as follows. Photosystem II (PSII) is a light-driven water:plastoquinone oxidoreductase that uses light energy to abstract electrons from H(2)O, generating O(2) and a proton gradient subsequently used for ATP formation. It consists of a core antenna complex that captures photons, and an electron transfer chain that converts photonic excitation into a charge separation. The D1/D2 (PsbA/PsbD) reaction center heterodimer binds P680, the primary electron donor of PSII as well as several subsequent electron acceptors. D2 is needed for assembly of a stable PSII complex. The chain is Photosystem II D2 protein from Glycine max (Soybean).